A 192-amino-acid chain; its full sequence is Virion infectivity factor (192 aa).

The segment at 14–17 is interaction with host APOBEC3F; F1-box; it reads DRMR. The segment at 40–44 is interaction with host APOBEC3G; G-box; sequence YRHHF. The tract at residues 54–72 is interaction with host APOBEC3F and APOBEC3G; FG-box; sequence EVHIPLETAELVITTYWGL. The interval 74-79 is interaction with host APOBEC3F; F2-box; sequence PGEREW. An RNA-binding region spans residues 75–114; the sequence is GEREWHLGQGVSIEWRQGRYRTQIDPGLADQLIHIYYFDC. Phosphothreonine; by host MAP4K1 is present on threonine 96. Zn(2+) is bound by residues histidine 108, cysteine 114, cysteine 133, and histidine 139. The HCCH motif signature appears at 108–139; that stretch reads HIYYFDCFSESAIRKAILGHKISPRCNYQAGH. A Phosphoserine; by host modification is found at serine 144. The short motif at 144–153 is the BC-box-like motif element; sequence SLQYLALTAL. Positions 151 to 164 are multimerization; that stretch reads TALIAPKKTKPPLP. Residues 151–180 are SOCS box-like; that stretch reads TALIAPKKTKPPLPSVQKLVEDRWNKPQKT. Positions 164 to 192 are disordered; that stretch reads PSVQKLVEDRWNKPQKTRGHRESHTMNGH. Serine 165 carries the phosphoserine; by host MAP4K1 modification. The segment at 171–172 is membrane association; it reads ED. Positions 183–192 are enriched in basic and acidic residues; that stretch reads HRESHTMNGH. At threonine 188 the chain carries Phosphothreonine; by host.

Belongs to the primate lentivirus group Vif protein family. As to quaternary structure, homomultimer; in vitro and presumably in vivo. Interacts with viral RNA and Pr55Gag precursor; these interactions mediate Vif incorporation into the virion. Interacts with the viral reverse transcriptase. Forms cullin-5-RING E3 ubiquitin-protein ligase complex (ECS complex) by interacting with host CUL5, RBX2, elongin BC complex (ELOB and ELOC) and CBFB/CBF-beta. Within the ECS complex, Vif interacts directly with host CUL5, ELOC and APOBEC (APOBEC3F and APOBEC3G) substrates. The ECS complex also contains some single-stranded RNA (ssRNA) that acts as a glue that bridges Vif with APOBEC (APOBEC3F and APOBEC3G) substrates. Interacts with host UBCE7IP1 isoform 3/ZIN and possibly with SAT. Interacts with host tyrosine kinases HCK and FYN; these interactions may decrease level of phosphorylated APOBEC3G incorporation into virions. Interacts with host ABCE1; this interaction may play a role in protecting viral RNA from damage during viral assembly. Interacts with host MDM2; this interaction targets Vif for degradation by the proteasome. In terms of processing, processed in virion by the viral protease. Post-translationally, highly phosphorylated on serine and threonine residues. Polyubiquitinated and degraded by the proteasome in the presence of APOBEC3G.

Its subcellular location is the host cytoplasm. The protein localises to the host cell membrane. It is found in the virion. Functionally, counteracts the innate antiviral activity of host APOBEC3F and APOBEC3G by promoting their ubiquitination and degradation. Acts as a substrate recognition component of an E3 ubiquitin-protein ligase complex: mechanistically, Vif hijacks a host cullin-5-RING E3 ubiquitin-protein ligase complex (ECS complex) and the transcription coactivator CBFB/CBF-beta to form an active E3 ubiquitin-protein ligase complex that targets APOBEC3G and APOBEC3F for polyubiquitination, leading to their degradation by the proteasome. Vif interaction with APOBEC3G also blocks its cytidine deaminase activity in a proteasome-independent manner, suggesting a dual inhibitory mechanism. May interact directly with APOBEC3G mRNA in order to inhibit its translation. Association with CBFB/CBF-beta also inhibits the transcription coactivator activity of CBFB/CBF-beta. Seems to play a role in viral morphology by affecting the stability of the viral nucleoprotein core. Finally, Vif also contributes to the G2 cell cycle arrest observed in HIV infected cells. In Homo sapiens (Human), this protein is Virion infectivity factor.